Reading from the N-terminus, the 504-residue chain is MVTIRADEISNIIRERIEQYNREVTIVNTGTVLQVGDGIARIYGLDEVMAGELVEFEEGTIGIALNLESNNVGVVLMGDGLMIQEGSSVKATGKIAQIPVSEAYLGRVINALANPIDGRGKISASESRLIESPAPGIISRRSVYEPLQTGLIAIDSMIPIGRGQRELIIGDRQTGKTAVATDTILNQQGQNVICVYVAIGQKASSVAQVVTSLQERGAMEYTIVVAETADAPAALQYLAPYTGAALAEYFMYREQHTLIIYDDLSKQAQAYRQMSLLLRRPPGREAYPGDVFYLHSRLLERAAKLSSQLGEGSMTALPIVETQSGDVSAYIPTNVISITDGQIFLSADLFNAGIRPAINVGISVSRVGSAAQIKAMKQVAGKLKLELAQFAELEAFAQFSSDLDKATQNQLARGQRLRELLKQSQSAPLTVEEQVMTIYTGTNGYLDGLEIGQVRKFLVQLRTYLKTNKPQFQEIISSTKTLTPEAESVLKEGIQEQLERFLLQ.

Residue 170-177 (GDRQTGKT) participates in ATP binding. Threonine 257 carries the phosphothreonine modification.

It belongs to the ATPase alpha/beta chains family. F-type ATPases have 2 components, CF(1) - the catalytic core - and CF(0) - the membrane proton channel. CF(1) has five subunits: alpha(3), beta(3), gamma(1), delta(1), epsilon(1). CF(0) has four main subunits: a, b, b' and c.

It localises to the plastid. It is found in the chloroplast thylakoid membrane. It carries out the reaction ATP + H2O + 4 H(+)(in) = ADP + phosphate + 5 H(+)(out). In terms of biological role, produces ATP from ADP in the presence of a proton gradient across the membrane. The alpha chain is a regulatory subunit. This chain is ATP synthase subunit alpha, chloroplastic, found in Nasturtium officinale (Watercress).